Here is a 224-residue protein sequence, read N- to C-terminus: ATP-dependent dethiobiotin synthetase BioD (224 aa).

Thr18 provides a ligand contact to Mg(2+). Lys39 is an active-site residue. Residue Ser43 participates in substrate binding. Mg(2+) is bound by residues Asp56 and Glu117. ATP contacts are provided by residues Asp56, 117–120 (EGVG), and 177–178 (NE).

It belongs to the dethiobiotin synthetase family. Homodimer. Mg(2+) is required as a cofactor.

Its subcellular location is the cytoplasm. It catalyses the reaction (7R,8S)-7,8-diammoniononanoate + CO2 + ATP = (4R,5S)-dethiobiotin + ADP + phosphate + 3 H(+). It participates in cofactor biosynthesis; biotin biosynthesis; biotin from 7,8-diaminononanoate: step 1/2. Functionally, catalyzes a mechanistically unusual reaction, the ATP-dependent insertion of CO2 between the N7 and N8 nitrogen atoms of 7,8-diaminopelargonic acid (DAPA, also called 7,8-diammoniononanoate) to form a ureido ring. The polypeptide is ATP-dependent dethiobiotin synthetase BioD (Xanthomonas euvesicatoria pv. vesicatoria (strain 85-10) (Xanthomonas campestris pv. vesicatoria)).